A 241-amino-acid chain; its full sequence is Uridylate kinase (241 aa).

Lysine 15–glycine 18 provides a ligand contact to ATP. An involved in allosteric activation by GTP region spans residues glycine 23 to glycine 28. Residue glycine 57 participates in UMP binding. The ATP site is built by glycine 58 and arginine 62. UMP-binding positions include aspartate 77 and threonine 138–threonine 145. Positions 165, 171, and 174 each coordinate ATP.

This sequence belongs to the UMP kinase family. Homohexamer.

It is found in the cytoplasm. It catalyses the reaction UMP + ATP = UDP + ADP. It participates in pyrimidine metabolism; CTP biosynthesis via de novo pathway; UDP from UMP (UMPK route): step 1/1. Allosterically activated by GTP. Inhibited by UTP. Catalyzes the reversible phosphorylation of UMP to UDP. The polypeptide is Uridylate kinase (Paracoccus zeaxanthinifaciens).